The following is a 291-amino-acid chain: Methyl-CpG-binding domain protein 3 (291 aa).

The MBD domain occupies 1 to 72 (MERKRWECPA…DFRTGKMLMS (72 aa)). A required for interaction with MBD2 region spans residues 1-80 (MERKRWECPA…MSKMNKSRQR (80 aa)). A Phosphoserine modification is found at S56. The required for interaction with MBD3L2 stretch occupies residues 60-80 (STFDFRTGKMLMSKMNKSRQR). K73 participates in a covalent cross-link: Glycyl lysine isopeptide (Lys-Gly) (interchain with G-Cter in SUMO2). S85 carries the post-translational modification Phosphoserine. Glycyl lysine isopeptide (Lys-Gly) (interchain with G-Cter in SUMO2) cross-links involve residues K90 and K92. S144 is subject to Phosphoserine. The stretch at 216 to 245 (KAFMVTDEDIRKQEELVQQVRKRLEEALMA) forms a coiled coil. Over residues 254 to 267 (LARDGEAPLDKACA) the composition is skewed to basic and acidic residues. A disordered region spans residues 254-291 (LARDGEAPLDKACAEDDDEEDEEEEEEEPDPDPEMEHV). Positions 268–291 (EDDDEEDEEEEEEEPDPDPEMEHV) are enriched in acidic residues.

As to quaternary structure, heterodimer (via N-terminus) with MBD2. Component of the MeCP1 histone deacetylase complex. Component of the nucleosome remodeling and deacetylase (NuRD) repressor complex, composed of core proteins MTA1, MTA2, MTA3, RBBP4, RBBP7, HDAC1, HDAC2, MBD2, MBD3, and peripherally associated proteins CDK2AP1, CDK2AP2, GATAD2A, GATAD2B, CHD3, CHD4 and CHD5. The exact stoichiometry of the NuRD complex is unknown, and some subunits such as MBD2 and MBD3, GATAD2A and GATAD2B, and CHD3, CHD4 and CHD5 define mutually exclusive NuRD complexes. Interacts with MBD3L2 (via N-terminus); the interaction is direct. Interacts with BCL6. Interacts with CDK2AP1. Interacts with HDAC1. Interacts with MTA2. Interacts with DNMT1. Interacts with GATAD2A. Interacts with GATAD2B. Does not interact with PWWP2A. Does not interact with PWWP2B.

It is found in the nucleus. The protein localises to the chromosome. Acts as a component of the histone deacetylase NuRD complex which participates in the remodeling of chromatin. Acts as transcriptional repressor and plays a role in gene silencing. Does not bind to methylated DNA by itself. Binds to a lesser degree DNA containing unmethylated CpG dinucleotides. Recruits histone deacetylases and DNA methyltransferases. The chain is Methyl-CpG-binding domain protein 3 (MBD3) from Homo sapiens (Human).